The primary structure comprises 336 residues: Melanoma-associated antigen B17 (336 aa).

Basic residues predominate over residues 1–17 (MPRGQASKRRAREKRRQ). A disordered region spans residues 1–108 (MPRGQASKRR…SSSESTGRDL (108 aa)). Low complexity-rich tracts occupy residues 39–54 (PSSSSPACQSPPQSFP) and 62–80 (SQRASYPSSPASAVSLTSS). The span at 90–103 (ESPNSFHGPSSSES) shows a compositional bias: polar residues. Residues 109 to 336 (LNTKTGELVQ…RARASRSFQP (228 aa)) form the MAGE domain.

The sequence is that of Melanoma-associated antigen B17 (MAGEB17) from Homo sapiens (Human).